A 365-amino-acid chain; its full sequence is tRNA/tmRNA (uracil-C(5))-methyltransferase (365 aa).

S-adenosyl-L-methionine is bound by residues Gln189, Tyr217, Asn222, Glu238, and Asp298. The active-site Nucleophile is Cys323. The active-site Proton acceptor is Glu357.

Belongs to the class I-like SAM-binding methyltransferase superfamily. RNA M5U methyltransferase family. TrmA subfamily.

The catalysed reaction is uridine(54) in tRNA + S-adenosyl-L-methionine = 5-methyluridine(54) in tRNA + S-adenosyl-L-homocysteine + H(+). It carries out the reaction uridine(341) in tmRNA + S-adenosyl-L-methionine = 5-methyluridine(341) in tmRNA + S-adenosyl-L-homocysteine + H(+). Functionally, dual-specificity methyltransferase that catalyzes the formation of 5-methyluridine at position 54 (m5U54) in all tRNAs, and that of position 341 (m5U341) in tmRNA (transfer-mRNA). The sequence is that of tRNA/tmRNA (uracil-C(5))-methyltransferase from Shewanella denitrificans (strain OS217 / ATCC BAA-1090 / DSM 15013).